We begin with the raw amino-acid sequence, 183 residues long: UPF0397 protein EAT1b_2102 (183 aa).

5 helical membrane passes run 9-29, 42-62, 74-94, 117-137, and 147-167; these read IVATGIGAAVFIILSRFAAIP, AFLAFMAVLFGPITAGLIGLI, SPWWSWVIVSGFVGLGIGLIA, AVVQAIGWIVIAPVLDILIYA, and GAVAATSNILTVGVIGTLLLV.

It belongs to the UPF0397 family.

It is found in the cell membrane. This chain is UPF0397 protein EAT1b_2102, found in Exiguobacterium sp. (strain ATCC BAA-1283 / AT1b).